We begin with the raw amino-acid sequence, 636 residues long: Eisosome protein sle1 (636 aa).

The interval 1 to 297 (MSHASKNYNA…HVIIYENKEG (297 aa)) is required for targeting the protein to eisosomes. Disordered regions lie at residues 111 to 205 (ANYM…SPAN), 222 to 284 (YSPS…VPPV), 313 to 387 (DPSG…TQHF), 400 to 451 (QYYQ…QPSL), 467 to 550 (DITP…VNNA), and 572 to 604 (PSNH…RFAN). 5 stretches are compositionally biased toward polar residues: residues 131–159 (PSQQ…QSYQ), 166–178 (RTSQ…NNYS), 188–204 (RRSS…GSPA), 237–255 (SYNN…TQKS), and 315–354 (SGSN…VVSR). Low complexity predominate over residues 355 to 383 (SGQNNNQPAQPGQYNQQSQPVQSYQSGQS). Polar residues-rich tracts occupy residues 400–412 (QYYQ…QPVQ) and 422–439 (PVQS…QPVQ). Positions 471 to 484 (TASSTTANNAYASA) are enriched in low complexity. A compositionally biased stretch (basic and acidic residues) spans 503–512 (SFERERDSGR). Polar residues predominate over residues 572–589 (PSNHAYSEGRSYTFTGGQ).

As to quaternary structure, component of eisosomes, large cytoplasmic protein assemblies that localize to specialized domains termed MCCs on the plasma membrane.

It is found in the cytoplasm. The protein localises to the cell cortex. Its subcellular location is the cell tip. Important for the biogenesis of filamentous eisosomes, large cytoplasmic protein assemblies that localize to specialized domains on the plasma membrane to cluster specific proteins at sites of membrane invaginations. This chain is Eisosome protein sle1 (sle1), found in Schizosaccharomyces pombe (strain 972 / ATCC 24843) (Fission yeast).